We begin with the raw amino-acid sequence, 471 residues long: ATP synthase subunit beta (471 aa).

Residue Gly-156 to Thr-163 participates in ATP binding.

The protein belongs to the ATPase alpha/beta chains family. As to quaternary structure, F-type ATPases have 2 components, CF(1) - the catalytic core - and CF(0) - the membrane proton channel. CF(1) has five subunits: alpha(3), beta(3), gamma(1), delta(1), epsilon(1). CF(0) has three main subunits: a(1), b(2) and c(9-12). The alpha and beta chains form an alternating ring which encloses part of the gamma chain. CF(1) is attached to CF(0) by a central stalk formed by the gamma and epsilon chains, while a peripheral stalk is formed by the delta and b chains.

It localises to the cell membrane. It catalyses the reaction ATP + H2O + 4 H(+)(in) = ADP + phosphate + 5 H(+)(out). In terms of biological role, produces ATP from ADP in the presence of a proton gradient across the membrane. The catalytic sites are hosted primarily by the beta subunits. In Macrococcus caseolyticus (strain JCSC5402) (Macrococcoides caseolyticum), this protein is ATP synthase subunit beta.